A 149-amino-acid chain; its full sequence is Down syndrome critical region protein 9 (149 aa).

The disordered stretch occupies residues 1-41 (MGRICPVNSRARRLRARPGRPSGDSLPYHQLQGGAPRLWSP).

In terms of tissue distribution, testis specific.

This chain is Down syndrome critical region protein 9 (DSCR9), found in Homo sapiens (Human).